We begin with the raw amino-acid sequence, 584 residues long: MAPAAMNLLCTVLYLLSSFAQVSDAAPWLFSRSIPASYHDGRLGAVASENSMCSEYGADMLKIGGNAADAVCIYRLSLFFAFLPYPALQEDRAMYHSGIGGGGFMLIRAPNGTYEFIDFRETAPAAAFQDMFKNNTSGSTSGGLASGVPGEVRGLEYLHKNYGKLPWKTVMEPAIRTARDGFRVTEDLSRIMLHSTKNGNFLAENAAWALDFAPQGTLLKVGDIITRRRYGDTLDKIAKYGADAFYTGPMAQAMVNALRAANGTMTLEDLKNYTVVSRPTAQIEYRGMTVTSTTAPSSGVVLLSILKLLNGYKNFFRMDPGPLSTHRMDEAIRFGYGQRTELGDPLFFSNLTDYQKKMISDEAANKNRMNISDEYTQDIAVYDPKGLESLNTPGTSHISTADRSGMAVSLTTTINLYFGSRVIVPETGIIMNNEMDDFSVPGRSNSFGYKPSPSNFIRPGKRPLSSICPTIITRPDGSLYFVSGAAGGSQIITGTLQSVINVMDRKMNVRQALKAPRLHDQLVPNVALMEDEFDKKTVDFMISRKHNVTREKSGSTVESIMRLKNGVFEASGEPRLANSGGVVV.

A signal peptide spans 1–25; it reads MAPAAMNLLCTVLYLLSSFAQVSDA. The N-linked (GlcNAc...) asparagine glycan is linked to Asn-111. An L-glutamate-binding site is contributed by Arg-120. N-linked (GlcNAc...) asparagine glycosylation is found at Asn-135, Asn-262, Asn-272, Asn-350, and Asn-370. Thr-395 (nucleophile) is an active-site residue. L-glutamate is bound by residues Thr-413, Glu-434, and 465–466; that span reads SS. N-linked (GlcNAc...) asparagine glycosylation is present at Asn-547.

It belongs to the gamma-glutamyltransferase family. Heterodimer composed of the light and heavy chains. The active site is located in the light chain. In terms of processing, cleaved by autocatalysis into a large and a small subunit and the autocatalytic cleavage is essential to the functional activation of the enzyme.

The protein resides in the secreted. It catalyses the reaction an N-terminal (5-L-glutamyl)-[peptide] + an alpha-amino acid = 5-L-glutamyl amino acid + an N-terminal L-alpha-aminoacyl-[peptide]. It carries out the reaction glutathione + H2O = L-cysteinylglycine + L-glutamate. The enzyme catalyses an S-substituted glutathione + H2O = an S-substituted L-cysteinylglycine + L-glutamate. The catalysed reaction is leukotriene C4 + H2O = leukotriene D4 + L-glutamate. The protein operates within sulfur metabolism; glutathione metabolism. Its function is as follows. Cleaves the gamma-glutamyl bond of extracellular glutathione (gamma-Glu-Cys-Gly), glutathione conjugates, and other gamma-glutamyl compounds. The metabolism of glutathione releases free glutamate and the dipeptide cysteinyl-glycine, which is hydrolyzed to cysteine and glycine by dipeptidases. In the presence of high concentrations of dipeptides and some amino acids, can also catalyze a transpeptidation reaction, transferring the gamma-glutamyl moiety to an acceptor amino acid to form a new gamma-glutamyl compound. Initiates extracellular glutathione (GSH) breakdown, provides cells with a local cysteine supply and contributes to maintain intracellular GSH level. It is part of the cell antioxidant defense mechanism. The chain is Glutathione hydrolase proenzyme from Arthroderma benhamiae (strain ATCC MYA-4681 / CBS 112371) (Trichophyton mentagrophytes).